The sequence spans 477 residues: Enolase 1, chloroplastic (477 aa).

The transit peptide at 1-41 (MALTTKPHHLQRSFLSPSRVSGERYLESAPSCLRFRRSGVQ) directs the protein to the chloroplast. Positions 203 and 212 each coordinate substrate. Glutamate 255 (proton donor) is an active-site residue. 3 residues coordinate Mg(2+): aspartate 290, glutamate 340, and aspartate 365. Substrate-binding residues include glutamate 340 and aspartate 365. Residue lysine 390 is the Proton acceptor of the active site. Substrate-binding positions include 417–420 (SHRS) and lysine 441. Serine 476 bears the Phosphoserine mark.

The protein belongs to the enolase family. Mg(2+) serves as cofactor. As to expression, highly expressed in young roots, young siliques, and shoot apex. Lowly expressed in young leaves, stems and cotyledons.

The protein resides in the plastid. The protein localises to the chloroplast. It catalyses the reaction (2R)-2-phosphoglycerate = phosphoenolpyruvate + H2O. It participates in carbohydrate degradation; glycolysis; pyruvate from D-glyceraldehyde 3-phosphate: step 4/5. This chain is Enolase 1, chloroplastic (ENO1), found in Arabidopsis thaliana (Mouse-ear cress).